Reading from the N-terminus, the 111-residue chain is Prefoldin subunit 2 (111 aa).

Coiled coils occupy residues Met1–His36 and Leu72–Gln92.

It belongs to the prefoldin subunit beta family. In terms of assembly, heterohexamer of two PFD-alpha type and four PFD-beta type subunits.

It is found in the cytoplasm. Functionally, binds specifically to cytosolic chaperonin (c-CPN) and transfers target proteins to it. Binds to nascent polypeptide chain and promotes folding in an environment in which there are many competing pathways for nonnative proteins. This chain is Prefoldin subunit 2 (GIM4), found in Saccharomyces cerevisiae (strain ATCC 204508 / S288c) (Baker's yeast).